The chain runs to 146 residues: Large ribosomal subunit protein uL15 (146 aa).

Residues 1-46 form a disordered region; it reads MLHQIKPFKGARKTVKRLGRGCGSGTGKTSGKGHKGQLARSGGGVR. The segment covering 9-19 has biased composition (basic residues); the sequence is KGARKTVKRLG. A compositionally biased stretch (gly residues) spans 20 to 30; sequence RGCGSGTGKTS.

The protein belongs to the universal ribosomal protein uL15 family. In terms of assembly, part of the 50S ribosomal subunit.

Its function is as follows. Binds to the 23S rRNA. The protein is Large ribosomal subunit protein uL15 of Phytoplasma mali (strain AT).